Reading from the N-terminus, the 285-residue chain is Bifunctional protein FolD (285 aa).

NADP(+)-binding positions include 165–167 and serine 190; that span reads GRS.

The protein belongs to the tetrahydrofolate dehydrogenase/cyclohydrolase family. In terms of assembly, homodimer.

The enzyme catalyses (6R)-5,10-methylene-5,6,7,8-tetrahydrofolate + NADP(+) = (6R)-5,10-methenyltetrahydrofolate + NADPH. It catalyses the reaction (6R)-5,10-methenyltetrahydrofolate + H2O = (6R)-10-formyltetrahydrofolate + H(+). The protein operates within one-carbon metabolism; tetrahydrofolate interconversion. Catalyzes the oxidation of 5,10-methylenetetrahydrofolate to 5,10-methenyltetrahydrofolate and then the hydrolysis of 5,10-methenyltetrahydrofolate to 10-formyltetrahydrofolate. The chain is Bifunctional protein FolD from Burkholderia ambifaria (strain ATCC BAA-244 / DSM 16087 / CCUG 44356 / LMG 19182 / AMMD) (Burkholderia cepacia (strain AMMD)).